A 435-amino-acid chain; its full sequence is UPF0597 protein ASA_0240 (435 aa).

Belongs to the UPF0597 family.

This chain is UPF0597 protein ASA_0240, found in Aeromonas salmonicida (strain A449).